Reading from the N-terminus, the 184-residue chain is UPF0398 protein BC_1561 (184 aa).

It belongs to the UPF0398 family.

The polypeptide is UPF0398 protein BC_1561 (Bacillus cereus (strain ATCC 14579 / DSM 31 / CCUG 7414 / JCM 2152 / NBRC 15305 / NCIMB 9373 / NCTC 2599 / NRRL B-3711)).